We begin with the raw amino-acid sequence, 348 residues long: NADH-quinone oxidoreductase subunit H (348 aa).

Transmembrane regions (helical) follow at residues 21 to 41, 87 to 107, 120 to 140, 166 to 186, 193 to 213, 258 to 278, 283 to 303, and 323 to 343; these read IIGI…IIYA, GLFL…WAVI, IGLL…IIAG, IGFV…SAIV, IFGF…AVVF, NVIL…LPPV, LYMV…FFVF, and WKVF…WLML.

Belongs to the complex I subunit 1 family. As to quaternary structure, NDH-1 is composed of 14 different subunits. Subunits NuoA, H, J, K, L, M, N constitute the membrane sector of the complex.

The protein localises to the cell inner membrane. It carries out the reaction a quinone + NADH + 5 H(+)(in) = a quinol + NAD(+) + 4 H(+)(out). In terms of biological role, NDH-1 shuttles electrons from NADH, via FMN and iron-sulfur (Fe-S) centers, to quinones in the respiratory chain. The immediate electron acceptor for the enzyme in this species is believed to be ubiquinone. Couples the redox reaction to proton translocation (for every two electrons transferred, four hydrogen ions are translocated across the cytoplasmic membrane), and thus conserves the redox energy in a proton gradient. This subunit may bind ubiquinone. The chain is NADH-quinone oxidoreductase subunit H from Rhizorhabdus wittichii (strain DSM 6014 / CCUG 31198 / JCM 15750 / NBRC 105917 / EY 4224 / RW1) (Sphingomonas wittichii).